The following is a 2885-amino-acid chain: E3 ubiquitin-protein ligase hyd (2885 aa).

The disordered stretch occupies residues 83–138 (SDAKCSTSGGSGTASASKAPSSSRPMARSRARLLRATGRSNSTGQGSGSRSTGVII). 2 stretches are compositionally biased toward low complexity: residues 95 to 108 (TASA…SRPM) and 116 to 138 (LRAT…GVII). Positions 154–196 (YVPEELISQAEVVLQGKSRNLIIRELQRTNLDVNLAVNNLLSR) constitute a UBA domain. Low complexity predominate over residues 266–276 (ANANAADSNQS). Disordered regions lie at residues 266-291 (ANAN…TGNS), 580-664 (NNLN…GRKD), and 711-731 (AATS…KEDD). 2 stretches are compositionally biased toward polar residues: residues 277–291 (TTRS…TGNS) and 598–615 (AMPS…SNSK). Phosphoserine is present on residues Ser628 and Ser631. Residues 650-664 (TTKEDSNAPQEGRKD) are compositionally biased toward basic and acidic residues. The span at 711 to 722 (AATSSTSNTAST) shows a compositional bias: low complexity. Ser967 is modified (phosphoserine). Positions 1008-1032 (ASSSNENSSFATMSSSAAGSASSTS) are enriched in low complexity. The disordered stretch occupies residues 1008 to 1035 (ASSSNENSSFATMSSSAAGSASSTSRDN). The segment at 1217 to 1285 (DTCSFTWTGA…EKCKCKALIA (69 aa)) adopts a UBR-type zinc-finger fold. Position 1362 is a phosphoserine (Ser1362). Positions 1642–1761 (NEDGMQDDES…IRSRDTARSS (120 aa)) are disordered. The span at 1669–1681 (NQSNQEVQRSVQA) shows a compositional bias: polar residues. Residues 1696 to 1721 (LEDESGDSSAQEEDGSEDGESDDQSD) are compositionally biased toward acidic residues. Residues 1735-1749 (TNSNARSDLAPQTMQ) are compositionally biased toward polar residues. Ser2037 carries the phosphoserine modification. The segment at 2124–2143 (IDSSKTGDGNVTNKAEGSTD) is disordered. Ser2183 bears the Phosphoserine mark. Positions 2473–2492 (NLDARPYTPPNSSDNATPES) are disordered. A compositionally biased stretch (polar residues) spans 2482–2492 (PNSSDNATPES). In terms of domain architecture, PABC spans 2484 to 2561 (SSDNATPESL…AIEIITFKQK (78 aa)). Ser2574 is subject to Phosphoserine. In terms of domain architecture, HECT spans 2782-2885 (FNDESSEGPD…AIKSKNFGFV (104 aa)). Cys2854 acts as the Glycyl thioester intermediate in catalysis.

The protein belongs to the UBR5 family.

It is found in the nucleus. It localises to the cytoplasm. The enzyme catalyses S-ubiquitinyl-[E2 ubiquitin-conjugating enzyme]-L-cysteine + [acceptor protein]-L-lysine = [E2 ubiquitin-conjugating enzyme]-L-cysteine + N(6)-ubiquitinyl-[acceptor protein]-L-lysine.. Its pathway is protein modification; protein ubiquitination. Its function is as follows. E3 ubiquitin-protein ligase which accepts ubiquitin from an E2 ubiquitin-conjugating enzyme in the form of a thioester and then directly transfers the ubiquitin to targeted substrate. Required for regulation of cell proliferation in imaginal disks and germ cells. Acts as a negative regulator of hh, ci and dpp expression in the anterior of the eye disk. Acts as a positive regulator of the canonical Wnt signaling pathway by mediating ubiquitination and degradation of gro. Catalyzes 'Lys-63'-linked polyubiquitination of akirin, thereby activating the immune deficiency pathway (Imd). The polypeptide is E3 ubiquitin-protein ligase hyd (hyd) (Drosophila melanogaster (Fruit fly)).